A 770-amino-acid polypeptide reads, in one-letter code: U3 small nucleolar RNA-associated protein 14 homolog A (770 aa).

The segment covering 1-17 (MNANQAAESNLLASNQQ) has biased composition (polar residues). The segment at 1-65 (MNANQAAESN…GKDRQKLADR (65 aa)) is disordered. 3 positions are modified to phosphoserine: Ser-30, Ser-32, and Ser-53. A coiled-coil region spans residues 41–68 (ERKHQKLLESISSLNGKDRQKLADRSEA). A compositionally biased stretch (basic and acidic residues) spans 56–65 (GKDRQKLADR). Phosphoserine occurs at positions 78 and 82. Residue Thr-206 is modified to Phosphothreonine. Coiled-coil stretches lie at residues 217 to 291 (SLEE…DKAR) and 318 to 348 (LEARQAMQEQLARNKELTQKVRAASESEEEG). 3 disordered regions span residues 334 to 361 (LTQKVRAASESEEEGEGQEEEEEPLVPD), 392 to 455 (KDLE…SSQE), and 467 to 505 (LRTENHQSGKQELSSARTAQREEPAREEEEPMLLQRPER). Acidic residues-rich tracts occupy residues 343 to 358 (ESEEEGEGQEEEEEPL) and 396 to 410 (DPAEPEAQETSESEE). Phosphoserine is present on residues Ser-406 and Ser-408. Basic and acidic residues predominate over residues 411–444 (EKAVVEEETLLKEFEERRSLRQKSELNHMAEPVH). Lys-449 participates in a covalent cross-link: Glycyl lysine isopeptide (Lys-Gly) (interchain with G-Cter in SUMO2). The residue at position 453 (Ser-453) is a Phosphoserine. Ser-567 bears the Phosphoserine mark. A Citrulline modification is found at Arg-588. A Glycyl lysine isopeptide (Lys-Gly) (interchain with G-Cter in SUMO2) cross-link involves residue Lys-732.

Belongs to the UTP14 family. Interacts with DHX37. Post-translationally, citrullinated by PADI4.

The protein localises to the nucleus. The protein resides in the nucleolus. Functionally, may be required for ribosome biogenesis. The protein is U3 small nucleolar RNA-associated protein 14 homolog A (UTP14A) of Bos taurus (Bovine).